A 258-amino-acid chain; its full sequence is Fibroblast growth factor-binding protein 3 (258 aa).

An N-terminal signal peptide occupies residues 1-26 (MTPPKLRASLSPSLLLLLSGCLLAAA). Intrachain disulfides connect C59–C80 and C90–C124. Residues 146-231 (RLVPRASPPA…GTGPDPDGLD (86 aa)) are disordered. Residues 186–197 (GTPPPQSAPPKE) show a composition bias toward pro residues. Residues 198 to 209 (NPSERKTNEGKR) are compositionally biased toward basic and acidic residues. C241 and C249 are joined by a disulfide.

Belongs to the fibroblast growth factor-binding protein family. As to quaternary structure, interacts with FGF2.

The protein localises to the secreted. In terms of biological role, heparin-binding protein which binds to FGF2, prevents binding of FGF2 to heparin and probably inhibits immobilization of FGF2 on extracellular matrix glycosaminoglycans, allowing its release and subsequent activation of FGFR signaling which leads to increased vascular permeability. The protein is Fibroblast growth factor-binding protein 3 (FGFBP3) of Homo sapiens (Human).